Consider the following 131-residue polypeptide: MDKKTIYFICTGNSCRSQMAEGWGREILGEEWNVYSAGIETHGVNPKAIEAMKEVDIDISNHTSDLIDNKILRQSDLVVTLCSDADENCPVIPPNVKKEHWGFDDPAGKSWSEFQRVRDEIGQKIKQFYDN.

Catalysis depends on nucleophile residues cysteine 10, cysteine 82, and cysteine 89. 2 cysteine pairs are disulfide-bonded: cysteine 10–cysteine 82 and cysteine 82–cysteine 89.

It belongs to the low molecular weight phosphotyrosine protein phosphatase family. Thioredoxin-coupled ArsC subfamily.

Its subcellular location is the cytoplasm. It catalyses the reaction arsenate + [thioredoxin]-dithiol + H(+) = arsenite + [thioredoxin]-disulfide + H2O. Its function is as follows. Catalyzes the reduction of arsenate [As(V)] to arsenite [As(III)]. This chain is Arsenate reductase 2, found in Staphylococcus saprophyticus subsp. saprophyticus (strain ATCC 15305 / DSM 20229 / NCIMB 8711 / NCTC 7292 / S-41).